A 206-amino-acid polypeptide reads, in one-letter code: MKVDVIKLDGKKAGSVDLDEALFGLEPRADILHRVVRWQRNNAQAGTHKVKTRREVSYSTKKIYRQKGTGGARHGARSAPIFRGGGVYKGPTPRSHGHELTKKFRKLGLRHALSAKAAEGRLVVIESIAMDEAKTSALAKQVKEMGWKRALIIDGSDVDANFAQAARNIEGLDVLPTMGANVYDILKRDTLVITKAGVEALEARLK.

The protein belongs to the universal ribosomal protein uL4 family. In terms of assembly, part of the 50S ribosomal subunit.

Functionally, one of the primary rRNA binding proteins, this protein initially binds near the 5'-end of the 23S rRNA. It is important during the early stages of 50S assembly. It makes multiple contacts with different domains of the 23S rRNA in the assembled 50S subunit and ribosome. In terms of biological role, forms part of the polypeptide exit tunnel. This chain is Large ribosomal subunit protein uL4, found in Jannaschia sp. (strain CCS1).